The primary structure comprises 197 residues: dTTP/UTP pyrophosphatase (197 aa).

Asp-70 acts as the Proton acceptor in catalysis.

It belongs to the Maf family. YhdE subfamily. It depends on a divalent metal cation as a cofactor.

It is found in the cytoplasm. It carries out the reaction dTTP + H2O = dTMP + diphosphate + H(+). The enzyme catalyses UTP + H2O = UMP + diphosphate + H(+). Nucleoside triphosphate pyrophosphatase that hydrolyzes dTTP and UTP. May have a dual role in cell division arrest and in preventing the incorporation of modified nucleotides into cellular nucleic acids. The protein is dTTP/UTP pyrophosphatase (yceF) of Shigella dysenteriae serotype 1 (strain Sd197).